Consider the following 255-residue polypeptide: 5'-nucleotidase SurE (255 aa).

Residues Asp-8, Asp-9, Ser-40, and Asn-93 each coordinate a divalent metal cation.

This sequence belongs to the SurE nucleotidase family. A divalent metal cation serves as cofactor.

It localises to the cytoplasm. It carries out the reaction a ribonucleoside 5'-phosphate + H2O = a ribonucleoside + phosphate. Its function is as follows. Nucleotidase that shows phosphatase activity on nucleoside 5'-monophosphates. In Bradyrhizobium sp. (strain ORS 278), this protein is 5'-nucleotidase SurE.